A 163-amino-acid chain; its full sequence is MFKKSSQLFSLVFFTIFSIFIGTASAIDLDEATRTVVVDSSGKTIVLTPEQVKRGKRLFNATCGACHVGGVTKTNPNVGLDPEALSLATPRRDNIAGLVDFLKNPTTYDGLESIAEVHPSIKSADIYPRMRSVTDEDLTAMAGHILLQPKIVTEKWGGGKIYY.

A signal peptide spans 1–26 (MFKKSSQLFSLVFFTIFSIFIGTASA). Heme c contacts are provided by cysteine 63, cysteine 66, histidine 67, and methionine 130.

Belongs to the cytochrome c family. PsbV subfamily. PSII is composed of 1 copy each of membrane proteins PsbA, PsbB, PsbC, PsbD, PsbE, PsbF, PsbH, PsbI, PsbJ, PsbK, PsbL, PsbM, PsbT, PsbY, PsbZ, Psb30/Ycf12, at least 3 peripheral proteins of the oxygen-evolving complex and a large number of cofactors. It forms dimeric complexes. Heme c is required as a cofactor.

The protein resides in the plastid. Its subcellular location is the chloroplast thylakoid membrane. In terms of biological role, one of the extrinsic, lumenal subunits of photosystem II (PSII). PSII is a light-driven water plastoquinone oxidoreductase, using light energy to abstract electrons from H(2)O, generating a proton gradient subsequently used for ATP formation. The extrinsic proteins stabilize the structure of photosystem II oxygen-evolving complex (OEC), the ion environment of oxygen evolution and protect the OEC against heat-induced inactivation. This chain is Photosystem II extrinsic protein V, found in Phaeodactylum tricornutum (strain CCAP 1055/1).